The following is a 967-amino-acid chain: Isoleucine--tRNA ligase (967 aa).

A 'HIGH' region motif is present at residues 64–74; the sequence is PYANGNIHIGH. Position 600 (Glu600) interacts with L-isoleucyl-5'-AMP. Positions 641-645 match the 'KMSKS' region motif; sequence KQSKS. Residue Lys644 participates in ATP binding.

Belongs to the class-I aminoacyl-tRNA synthetase family. IleS type 1 subfamily. Monomer.

The protein localises to the cytoplasm. The enzyme catalyses tRNA(Ile) + L-isoleucine + ATP = L-isoleucyl-tRNA(Ile) + AMP + diphosphate. Catalyzes the attachment of isoleucine to tRNA(Ile). As IleRS can inadvertently accommodate and process structurally similar amino acids such as valine, to avoid such errors it has two additional distinct tRNA(Ile)-dependent editing activities. One activity is designated as 'pretransfer' editing and involves the hydrolysis of activated Val-AMP. The other activity is designated 'posttransfer' editing and involves deacylation of mischarged Val-tRNA(Ile). In Agrobacterium fabrum (strain C58 / ATCC 33970) (Agrobacterium tumefaciens (strain C58)), this protein is Isoleucine--tRNA ligase.